A 434-amino-acid chain; its full sequence is D-amino acid dehydrogenase (434 aa).

3–17 (VVILGSGVVGVASAW) is an FAD binding site.

Belongs to the DadA oxidoreductase family. FAD serves as cofactor.

It catalyses the reaction a D-alpha-amino acid + A + H2O = a 2-oxocarboxylate + AH2 + NH4(+). Its pathway is amino-acid degradation; D-alanine degradation; NH(3) and pyruvate from D-alanine: step 1/1. Oxidative deamination of D-amino acids. This chain is D-amino acid dehydrogenase, found in Yersinia enterocolitica serotype O:8 / biotype 1B (strain NCTC 13174 / 8081).